We begin with the raw amino-acid sequence, 173 residues long: Ribosome maturation factor RimM (173 aa).

The PRC barrel domain maps to 97–171 (EGEFFYHEII…QITIEPMEGL (75 aa)).

The protein belongs to the RimM family. Binds ribosomal protein uS19.

It localises to the cytoplasm. Functionally, an accessory protein needed during the final step in the assembly of 30S ribosomal subunit, possibly for assembly of the head region. Essential for efficient processing of 16S rRNA. May be needed both before and after RbfA during the maturation of 16S rRNA. It has affinity for free ribosomal 30S subunits but not for 70S ribosomes. The sequence is that of Ribosome maturation factor RimM from Halalkalibacterium halodurans (strain ATCC BAA-125 / DSM 18197 / FERM 7344 / JCM 9153 / C-125) (Bacillus halodurans).